The chain runs to 397 residues: Phosphoglycerate kinase (397 aa).

Substrate contacts are provided by residues Asp-21–Asn-23, Arg-36, His-59–Arg-62, Arg-119, and Arg-152. ATP contacts are provided by residues Lys-202, Glu-324, and Gly-354–Thr-357.

It belongs to the phosphoglycerate kinase family. Monomer.

The protein localises to the cytoplasm. The enzyme catalyses (2R)-3-phosphoglycerate + ATP = (2R)-3-phospho-glyceroyl phosphate + ADP. Its pathway is carbohydrate degradation; glycolysis; pyruvate from D-glyceraldehyde 3-phosphate: step 2/5. The chain is Phosphoglycerate kinase from Cereibacter sphaeroides (strain ATCC 17029 / ATH 2.4.9) (Rhodobacter sphaeroides).